We begin with the raw amino-acid sequence, 37 residues long: Photosystem II reaction center protein L (37 aa).

The Cytoplasmic segment spans residues 1–13 (MEPNPNRQPVELN). Residues 14 to 35 (RTSLYLGLLLILVLALLFSSYF) traverse the membrane as a helical segment. The Lumenal portion of the chain corresponds to 36 to 37 (FN).

As to quaternary structure, PSII is composed of 1 copy each of membrane proteins PsbA, PsbB, PsbC, PsbD, PsbE, PsbF, PsbH, PsbI, PsbJ, PsbK, PsbL, PsbM, PsbT, PsbX, PsbY, PsbZ, Psb30/Ycf12, peripheral proteins PsbO, CyanoQ (PsbQ), PsbU, PsbV and a large number of cofactors. It forms dimeric complexes. Part of a photosystem II (PSII) assembly intermediate complex PSII-I; crystallized from a strain deleted of psbJ, it forms monomeric PSII before addition of the oxygen evolving complex. PSII-I includes 3 assembly factors not found in mature PSII (Psb27, Psb28 and Psb34). PSII binds multiple chlorophylls, carotenoids and specific lipids. is required as a cofactor.

It is found in the cellular thylakoid membrane. One of the components of the core complex of photosystem II (PSII). PSII is a light-driven water:plastoquinone oxidoreductase that uses light energy to abstract electrons from H(2)O, generating O(2) and a proton gradient subsequently used for ATP formation. It consists of a core antenna complex that captures photons, and an electron transfer chain that converts photonic excitation into a charge separation. This subunit is found at the monomer-monomer interface and is required for correct PSII assembly and/or dimerization. This subunit may make specific contacts with lipid(s). The protein is Photosystem II reaction center protein L of Thermosynechococcus vestitus (strain NIES-2133 / IAM M-273 / BP-1).